The chain runs to 272 residues: HMP-PP phosphatase (272 aa).

Residue D8 is the Nucleophile of the active site. D8, D10, and D212 together coordinate Mg(2+).

It belongs to the HAD-like hydrolase superfamily. Cof family. The cofactor is Mg(2+).

It carries out the reaction 4-amino-2-methyl-5-(diphosphooxymethyl)pyrimidine + H2O = 4-amino-2-methyl-5-(phosphooxymethyl)pyrimidine + phosphate + H(+). Its function is as follows. Catalyzes the hydrolysis of 4-amino-2-methyl-5-hydroxymethylpyrimidine pyrophosphate (HMP-PP) to 4-amino-2-methyl-5-hydroxymethylpyrimidine phosphate (HMP-P). The chain is HMP-PP phosphatase from Escherichia coli O81 (strain ED1a).